The primary structure comprises 270 residues: Aliphatic sulfonates import ATP-binding protein SsuB 2 (270 aa).

In terms of domain architecture, ABC transporter spans 17-241 (LLDLRIARKL…PRDRRDPSLA (225 aa)). 50–57 (GPSGCGKS) contacts ATP.

It belongs to the ABC transporter superfamily. Aliphatic sulfonates importer (TC 3.A.1.17.2) family. As to quaternary structure, the complex is composed of two ATP-binding proteins (SsuB), two transmembrane proteins (SsuC) and a solute-binding protein (SsuA).

It localises to the cell inner membrane. The catalysed reaction is ATP + H2O + aliphatic sulfonate-[sulfonate-binding protein]Side 1 = ADP + phosphate + aliphatic sulfonateSide 2 + [sulfonate-binding protein]Side 1.. Part of the ABC transporter complex SsuABC involved in aliphatic sulfonates import. Responsible for energy coupling to the transport system. In Burkholderia cenocepacia (strain HI2424), this protein is Aliphatic sulfonates import ATP-binding protein SsuB 2.